The sequence spans 174 residues: MATGPRYKVPFRRRREGRTNYHLRLKLLLSRQDRVVVRKSSRNVQIQLIAPTPDGDITYSSAVSNELAKYGYTGATGNTTAAYLTGLLFGLKSLQKGYEGGILDIGLQASSAGSRVYAALKGVVDSGFEIPCSPEVFPPDERIRGEHIAGYREESSDLPEQFEATKEKIFAEFS.

It belongs to the universal ribosomal protein uL18 family. Part of the 50S ribosomal subunit. Contacts the 5S and 23S rRNAs.

In terms of biological role, this is one of the proteins that bind and probably mediate the attachment of the 5S RNA into the large ribosomal subunit, where it forms part of the central protuberance. In Methanosarcina acetivorans (strain ATCC 35395 / DSM 2834 / JCM 12185 / C2A), this protein is Large ribosomal subunit protein uL18.